Here is a 310-residue protein sequence, read N- to C-terminus: Uridine phosphorylase 1 (310 aa).

Phosphate is bound by residues G60, R94, and 138–141 (RIGT). Uridine is bound by residues 142-143 (SG) and 217-219 (QGR).

This sequence belongs to the PNP/UDP phosphorylase family. Homodimer.

The catalysed reaction is uridine + phosphate = alpha-D-ribose 1-phosphate + uracil. It catalyses the reaction 2'-deoxyuridine + phosphate = 2-deoxy-alpha-D-ribose 1-phosphate + uracil. Its pathway is pyrimidine metabolism; UMP biosynthesis via salvage pathway; uracil from uridine (phosphorylase route): step 1/1. In terms of biological role, catalyzes the reversible phosphorylytic cleavage of uridine to uracil and ribose-1-phosphate which can then be utilized as carbon and energy sources or in the rescue of pyrimidine bases for nucleotide synthesis. Shows broad substrate specificity and can also accept deoxyuridine and other analogous compounds. This Homo sapiens (Human) protein is Uridine phosphorylase 1.